The chain runs to 206 residues: MAVPRWAVRDLTQISSARELSLRLEQARNDFRATVGSICYFNASARTPGQFDDEYIMTDQSLTYVYADGVTAQSCAMNRLLPSSSSNFGAAATAIPPWLLDPPRLNRLLREGTDEGGLVNYYEGPHKNAFFLAIMRSCIFVRPGADEINGVSYDFFARSGNYTEQAEEEEEEEEEEEEEEVLDREFQLGNLVSYPIIAWGSCPNSA.

Positions 162–182 are disordered; it reads YTEQAEEEEEEEEEEEEEEVL. Positions 165–182 are enriched in acidic residues; the sequence is QAEEEEEEEEEEEEEEVL.

Functionally, involved in tumor formation and increases auxin and cytokinin effects in host plants. This is Protein 6b (6b) from Allorhizobium ampelinum (strain ATCC BAA-846 / DSM 112012 / S4) (Agrobacterium vitis (strain S4)).